The sequence spans 61 residues: Small ribosomal subunit protein uS14 (61 aa).

The Zn(2+) site is built by Cys-24, Cys-27, Cys-40, and Cys-43.

This sequence belongs to the universal ribosomal protein uS14 family. Zinc-binding uS14 subfamily. As to quaternary structure, part of the 30S ribosomal subunit. Contacts proteins S3 and S10. Zn(2+) is required as a cofactor.

Functionally, binds 16S rRNA, required for the assembly of 30S particles and may also be responsible for determining the conformation of the 16S rRNA at the A site. The protein is Small ribosomal subunit protein uS14 of Clostridium botulinum (strain 657 / Type Ba4).